A 582-amino-acid chain; its full sequence is Protein NRT1/ PTR FAMILY 5.2 (582 aa).

A run of 11 helical transmembrane segments spans residues 77 to 97 (WVGT…ALLG), 100 to 120 (ITFV…TLSV), 141 to 161 (ASVL…IGTG), 189 to 209 (FFNW…TVLV), 217 to 237 (WTLG…IFLL), 334 to 354 (PVLF…TLFV), 370 to 390 (IPPA…IVLY), 408 to 428 (ITLL…MIVA), 452 to 472 (LPLT…ADSF), 493 to 515 (GTSY…LSTV), and 538 to 558 (YYYL…LVVV).

Belongs to the major facilitator superfamily. Proton-dependent oligopeptide transporter (POT/PTR) (TC 2.A.17) family. As to expression, expressed in roots. Detected in shoots, leaves and flowers.

Its subcellular location is the membrane. Functionally, peptide transporter involved in stress tolerance in seeds during germination and in defense against virulent bacterial pathogens. The polypeptide is Protein NRT1/ PTR FAMILY 5.2 (NPF5.2) (Arabidopsis thaliana (Mouse-ear cress)).